The following is a 285-amino-acid chain: Cell division protein DivIB (285 aa).

The span at 1–19 shows a compositional bias: basic and acidic residues; the sequence is MNEKNKNDESKHQEDKLQD. The interval 1 to 20 is disordered; that stretch reads MNEKNKNDESKHQEDKLQDQ. Residues 1–66 are Cytoplasmic-facing; sequence MNEKNKNDES…NRFNAMERNS (66 aa). Residues 67-87 traverse the membrane as a helical segment; the sequence is IHMIVILSIISLLLILLLSPL. The region spanning 88-158 is the POTRA domain; the sequence is MRFQKVEITG…QVAQIKIEEN (71 aa). At 88–285 the chain is on the extracellular side; the sequence is MRFQKVEITG…FQVGTYFQQY (198 aa).

The protein belongs to the FtsQ/DivIB family. DivIB subfamily.

Its subcellular location is the cell membrane. Cell division protein that may be involved in stabilizing or promoting the assembly of the division complex. The polypeptide is Cell division protein DivIB (Weissella koreensis (strain KACC 15510)).